We begin with the raw amino-acid sequence, 506 residues long: Subtilisin-like serine protease Cur l 4.0101 (506 aa).

Residues 1 to 15 (MKYSLIAALPALAAA) form the signal peptide. Residues 16–135 (SPTFSTETIH…IERDSEVRIL (120 aa)) constitute a propeptide, removed in mature form. One can recognise an Inhibitor I9 domain in the interval 43–134 (SYMVVFKKHV…YIERDSEVRI (92 aa)). The interval 59–79 (HDWVQSVHSKNTQERMELRKR) is disordered. The span at 69–79 (NTQERMELRKR) shows a compositional bias: basic and acidic residues. Residues 147-453 (PWGLARISHR…GGSSNYTDII (307 aa)) form the Peptidase S8 domain. Active-site charge relay system residues include aspartate 183 and histidine 215. N-linked (GlcNAc...) asparagine glycosylation is found at asparagine 245 and asparagine 285. The active-site Charge relay system is serine 381. An N-linked (GlcNAc...) asparagine glycan is attached at asparagine 448. Positions 459-506 (TVKKAASKEEEKESEFRITIPSLSELEDDFEKAKESAGRKAHHVGGKL) are cleaved as a propeptide — removed in mature form.

Belongs to the peptidase S8 family.

In terms of biological role, serine protease. In Cochliobolus lunatus (Filamentous fungus), this protein is Subtilisin-like serine protease Cur l 4.0101.